Here is a 324-residue protein sequence, read N- to C-terminus: tRNA pseudouridine synthase B (324 aa).

The Nucleophile role is filled by Asp49. Residues 87-107 (RSTDDLEGQPTKTSDKRPSRE) are disordered.

It belongs to the pseudouridine synthase TruB family. Type 1 subfamily.

It carries out the reaction uridine(55) in tRNA = pseudouridine(55) in tRNA. Functionally, responsible for synthesis of pseudouridine from uracil-55 in the psi GC loop of transfer RNAs. The protein is tRNA pseudouridine synthase B of Brucella canis (strain ATCC 23365 / NCTC 10854 / RM-666).